The sequence spans 202 residues: Urease accessory protein UreG (202 aa).

Position 11-18 (11-18) interacts with GTP; it reads GPVGSGKT.

The protein belongs to the SIMIBI class G3E GTPase family. UreG subfamily. Homodimer. UreD, UreF and UreG form a complex that acts as a GTP-hydrolysis-dependent molecular chaperone, activating the urease apoprotein by helping to assemble the nickel containing metallocenter of UreC. The UreE protein probably delivers the nickel.

The protein resides in the cytoplasm. In terms of biological role, facilitates the functional incorporation of the urease nickel metallocenter. This process requires GTP hydrolysis, probably effectuated by UreG. The protein is Urease accessory protein UreG of Prochlorococcus marinus (strain MIT 9313).